The primary structure comprises 562 residues: Protein wntless (562 aa).

The Cytoplasmic portion of the chain corresponds to 1–13; it reads MSGTILENLSGRK. Residues 14 to 34 traverse the membrane as a helical segment; the sequence is LSILVATLLLCQVLCFLLGGL. Over 35 to 239 the chain is Lumenal; it reads YAPLPAGHVT…AIHQNGGFTQ (205 aa). N58 carries N-linked (GlcNAc...) asparagine glycosylation. A helical membrane pass occupies residues 240-260; it reads IWLLLKTMLFPFVVGIMIWFW. Residues 261–270 lie on the Cytoplasmic side of the membrane; that stretch reads RRVHLLQRSP. The chain crosses the membrane as a helical span at residues 271–291; sequence ALLEYMLIYLGAALTFLNLPL. Residues 292–311 lie on the Lumenal side of the membrane; sequence EYLSLVYEMPYMLLLSDIRQ. A helical membrane pass occupies residues 312–332; sequence GIFYAMLLTFWLVFAGEHMLI. Residues 333-344 lie on the Cytoplasmic side of the membrane; the sequence is QDAPNKSTIRSR. Residues 345–365 form a helical membrane-spanning segment; sequence YWKHLSAVVVGCISLFVFDIC. At 366 to 390 the chain is on the lumenal side; the sequence is ERGVQLRNPFYSIWTTPLGAKVAMT. The helical transmembrane segment at 391–411 threads the bilayer; sequence FIVLAGVSAAIYFLFLCYMIW. At 412–441 the chain is on the cytoplasmic side; that stretch reads KVFRNIGDKRTSLPSMSQARRLHYEGLIYR. A helical transmembrane segment spans residues 442–462; the sequence is FKFLMLATLVCAALTVAGFIM. The Lumenal portion of the chain corresponds to 463–482; the sequence is GQMAEGQWDWNDNVAIQPTS. The helical transmembrane segment at 483-503 threads the bilayer; sequence AFLTGVYGMWNIYIFALLILY. Topologically, residues 504–562 are cytoplasmic; it reads APSHKQWPAMHHSDETTQSNENIVASAASEEIEFSHLPSDSNPSEISSLTSFTRKVAFD.

Belongs to the wntless family. Interacts with wg; in the Golgi. Interacts with Vps35, a component of the retromer complex; wls stability is regulated by Vps35.

Its subcellular location is the presynaptic cell membrane. It localises to the postsynaptic cell membrane. The protein localises to the cell membrane. It is found in the endoplasmic reticulum membrane. The protein resides in the endosome membrane. Its subcellular location is the golgi apparatus membrane. Its function is as follows. A segment polarity gene required for wingless (wg)-dependent patterning processes, acting in both wg-sending cells and wg-target cells. In non-neuronal cells wls directs wg secretion. The wls traffic loop encompasses the Golgi, the cell surface, an endocytic compartment and a retrograde route leading back to the Golgi, and involves clathrin-mediated endocytosis and the retromer complex (a conserved protein complex consisting of Vps35 and Vps26). In neuronal cells (the larval motorneuron NMJ), the wg signal moves across the synapse via the release of wls-containing exosome-like vesicles. Postsynaptic wls is required for the trafficking of fz2 through the fz2-interacting protein Grip. This is Protein wntless from Drosophila sechellia (Fruit fly).